The chain runs to 223 residues: Serine/threonine/tyrosine-interacting protein (223 aa).

The Tyrosine-protein phosphatase domain maps to 28 to 176 (EMQEVLPGLF…LQEYEAIYLA (149 aa)). The short motif at 76–78 (FQQ) is the Interaction with FBXW7 element. Residues Ser184 and Ser201 each carry the phosphoserine modification. The disordered stretch occupies residues 199 to 223 (TGSVKRTHEEDDDFGNMQVATAQNG).

This sequence belongs to the protein-tyrosine phosphatase family. Non-receptor class subfamily. As to quaternary structure, interacts with MAPK1; independently of MAPK1 phosphorylation status. Interacts with CARHSP1/Crhsp-24. Interacts (via FQQ motif) with FBXW7 (via F-box domain); the interaction is direct and prevents FBXW7 interaction with SKP1, a component of the SCF(FBXW7) complex. As to expression, widely expressed with highest levels in muscle, testis and brain. In testis, expression starts 13-14 days after birth and is limited to the seminiferous tubule and to round and elongating spermatids. Expression is low in condensing spermatids and pachytene spermatocytes, and absent in spermatogonia, spermatozoa and somatic Sertoli cells.

It localises to the nucleus. The protein resides in the cytoplasm. Its subcellular location is the cytosol. Its function is as follows. Catalytically inactive phosphatase. Acts as a nuclear anchor for MAPK1/MAPK3 (ERK1/ERK2). Modulates cell-fate decisions and cell migration by spatiotemporal regulation of MAPK1/MAPK3 (ERK1/ERK2). By binding to the F-box of FBXW7, prevents the assembly of FBXW7 into the SCF E3 ubiquitin-protein ligase complex, and thereby inhibits degradation of its substrates. Plays a role in spermatogenesis. The sequence is that of Serine/threonine/tyrosine-interacting protein from Mus musculus (Mouse).